The sequence spans 561 residues: Arginine--tRNA ligase (561 aa).

Residues 128–138 (ANPTGPLHVGH) carry the 'HIGH' region motif.

It belongs to the class-I aminoacyl-tRNA synthetase family. As to quaternary structure, monomer.

The protein resides in the cytoplasm. The catalysed reaction is tRNA(Arg) + L-arginine + ATP = L-arginyl-tRNA(Arg) + AMP + diphosphate. The chain is Arginine--tRNA ligase from Marinobacter nauticus (strain ATCC 700491 / DSM 11845 / VT8) (Marinobacter aquaeolei).